A 217-amino-acid chain; its full sequence is NADH dehydrogenase (ubiquinone) 23 kDa subunit (217 aa).

The transit peptide at 1-26 (MSLTMRIFTASRNGQRLFGSHGARLL) directs the protein to the mitochondrion. 4Fe-4S ferredoxin-type domains follow at residues 109–138 (RRYP…IEAE) and 148–177 (TRYD…EGPN). Positions 118, 121, 124, 128, 157, 160, 163, and 167 each coordinate [4Fe-4S] cluster.

This sequence belongs to the complex I 23 kDa subunit family. As to quaternary structure, part of the mitochondrial membrane respiratory chain NADH dehydrogenase (Complex I). This is a component of the iron-sulfur (IP) fragment of the enzyme. [4Fe-4S] cluster serves as cofactor. As to expression, expressed in muscles (at protein level).

The protein resides in the mitochondrion. The catalysed reaction is a ubiquinone + NADH + 5 H(+)(in) = a ubiquinol + NAD(+) + 4 H(+)(out). Functionally, core subunit of the mitochondrial membrane respiratory chain NADH dehydrogenase (Complex I) that is believed to belong to the minimal assembly required for catalysis. Complex I functions in the transfer of electrons from NADH to the respiratory chain. The immediate electron acceptor for the enzyme is believed to be ubiquinone. The chain is NADH dehydrogenase (ubiquinone) 23 kDa subunit from Drosophila melanogaster (Fruit fly).